A 111-amino-acid chain; its full sequence is Transcription initiation factor IIA subunit 2 (111 aa).

This sequence belongs to the TFIIA subunit 2 family. In terms of assembly, TFIIA is a heterodimer of the large unprocessed subunit 1 and a small subunit gamma. It was originally believed to be a heterotrimer of an alpha, a beta and a gamma subunit. Interacts with NCOA6 general coactivator. TFIIA forms a complex with TBP.

It is found in the nucleus. TFIIA is a component of the transcription machinery of RNA polymerase II and plays an important role in transcriptional activation. TFIIA in a complex with TBP mediates transcriptional activity. This is Transcription initiation factor IIA subunit 2 (gtf2a2) from Paralichthys olivaceus (Bastard halibut).